Consider the following 227-residue polypeptide: Cytochrome c oxidase subunit 2 (227 aa).

The Mitochondrial intermembrane portion of the chain corresponds to 1 to 14; it reads MAYPFQLGLQDATS. Residues 15 to 45 form a helical membrane-spanning segment; the sequence is PIMEELLHFHDHALMIVFLISSLVLYIISLM. At 46–59 the chain is on the mitochondrial matrix side; that stretch reads LTTKLTHTSTMDAQ. A helical membrane pass occupies residues 60–87; sequence EVETVWTILPAIILILIALPSLRILYMM. Residues 88–227 lie on the Mitochondrial intermembrane side of the membrane; sequence DEINNPSLTV…YFETWSALMV (140 aa). The Cu cation site is built by His-161, Cys-196, Glu-198, Cys-200, His-204, and Met-207. Glu-198 contributes to the Mg(2+) binding site. Tyr-218 carries the post-translational modification Phosphotyrosine.

Belongs to the cytochrome c oxidase subunit 2 family. Component of the cytochrome c oxidase (complex IV, CIV), a multisubunit enzyme composed of 14 subunits. The complex is composed of a catalytic core of 3 subunits MT-CO1, MT-CO2 and MT-CO3, encoded in the mitochondrial DNA, and 11 supernumerary subunits COX4I, COX5A, COX5B, COX6A, COX6B, COX6C, COX7A, COX7B, COX7C, COX8 and NDUFA4, which are encoded in the nuclear genome. The complex exists as a monomer or a dimer and forms supercomplexes (SCs) in the inner mitochondrial membrane with NADH-ubiquinone oxidoreductase (complex I, CI) and ubiquinol-cytochrome c oxidoreductase (cytochrome b-c1 complex, complex III, CIII), resulting in different assemblies (supercomplex SCI(1)III(2)IV(1) and megacomplex MCI(2)III(2)IV(2)). Found in a complex with TMEM177, COA6, COX18, COX20, SCO1 and SCO2. Interacts with TMEM177 in a COX20-dependent manner. Interacts with COX20. Interacts with COX16. It depends on Cu cation as a cofactor.

It localises to the mitochondrion inner membrane. The enzyme catalyses 4 Fe(II)-[cytochrome c] + O2 + 8 H(+)(in) = 4 Fe(III)-[cytochrome c] + 2 H2O + 4 H(+)(out). Functionally, component of the cytochrome c oxidase, the last enzyme in the mitochondrial electron transport chain which drives oxidative phosphorylation. The respiratory chain contains 3 multisubunit complexes succinate dehydrogenase (complex II, CII), ubiquinol-cytochrome c oxidoreductase (cytochrome b-c1 complex, complex III, CIII) and cytochrome c oxidase (complex IV, CIV), that cooperate to transfer electrons derived from NADH and succinate to molecular oxygen, creating an electrochemical gradient over the inner membrane that drives transmembrane transport and the ATP synthase. Cytochrome c oxidase is the component of the respiratory chain that catalyzes the reduction of oxygen to water. Electrons originating from reduced cytochrome c in the intermembrane space (IMS) are transferred via the dinuclear copper A center (CU(A)) of subunit 2 and heme A of subunit 1 to the active site in subunit 1, a binuclear center (BNC) formed by heme A3 and copper B (CU(B)). The BNC reduces molecular oxygen to 2 water molecules using 4 electrons from cytochrome c in the IMS and 4 protons from the mitochondrial matrix. This is Cytochrome c oxidase subunit 2 (MT-CO2) from Canis aureus (Golden jackal).